We begin with the raw amino-acid sequence, 311 residues long: Methionyl-tRNA formyltransferase (311 aa).

Residue 110 to 113 coordinates (6S)-5,6,7,8-tetrahydrofolate; that stretch reads SLLP.

This sequence belongs to the Fmt family.

It catalyses the reaction L-methionyl-tRNA(fMet) + (6R)-10-formyltetrahydrofolate = N-formyl-L-methionyl-tRNA(fMet) + (6S)-5,6,7,8-tetrahydrofolate + H(+). In terms of biological role, attaches a formyl group to the free amino group of methionyl-tRNA(fMet). The formyl group appears to play a dual role in the initiator identity of N-formylmethionyl-tRNA by promoting its recognition by IF2 and preventing the misappropriation of this tRNA by the elongation apparatus. The chain is Methionyl-tRNA formyltransferase from Sulfurihydrogenibium sp. (strain YO3AOP1).